A 790-amino-acid polypeptide reads, in one-letter code: Phenylalanine--tRNA ligase beta subunit (790 aa).

In terms of domain architecture, tRNA-binding spans Pro-39–Cys-154. A B5 domain is found at Phe-404–Pro-483. Mg(2+)-binding residues include Asp-457, Asp-463, Glu-466, and Glu-467. Positions Pro-694–Ser-790 constitute an FDX-ACB domain.

It belongs to the phenylalanyl-tRNA synthetase beta subunit family. Type 1 subfamily. Tetramer of two alpha and two beta subunits. The cofactor is Mg(2+).

It is found in the cytoplasm. It catalyses the reaction tRNA(Phe) + L-phenylalanine + ATP = L-phenylalanyl-tRNA(Phe) + AMP + diphosphate + H(+). This Chlamydia trachomatis serovar D (strain ATCC VR-885 / DSM 19411 / UW-3/Cx) protein is Phenylalanine--tRNA ligase beta subunit (pheT).